We begin with the raw amino-acid sequence, 60 residues long: Cecropin-B1 (60 aa).

The signal sequence occupies residues 1–24 (MNFSKVFALVLLIGLVLLTGHTEA).

It belongs to the cecropin family.

It localises to the secreted. Its function is as follows. Putative antimicrobial peptide. Partially neutralizes lipopolysaccharides (LPS). Exhibits anti-inflammatory properties: inhibits LPS-induced iNOS/NOS2 transcription, nitric oxide (NO) and pro-inflammatory cytokine production in mouse macrophages and human peripheral blood mononuclear cells (PBMCs); inhibits LPS-induced activation of MAPK and NF-kappa-B signaling pathways in mouse macrophages. This chain is Cecropin-B1, found in Aedes aegypti (Yellowfever mosquito).